The sequence spans 355 residues: NAD-dependent protein deacylase sirtuin-6 (355 aa).

Serine 2 bears the N-acetylserine mark. The residue at position 10 (serine 10) is a Phosphoserine; by MAPK8. In terms of domain architecture, Deacetylase sirtuin-type spans 27 to 272; sequence PEELERKVWE…TRLMKHLGLE (246 aa). Lysine 33 carries the N6-acetyllysine modification. Residues alanine 53, threonine 57, phenylalanine 64, arginine 65, tryptophan 71, glutamine 113, and histidine 133 each coordinate NAD(+). Histidine 133 functions as the Proton acceptor in the catalytic mechanism. Residues cysteine 141, cysteine 144, and cysteine 166 each contribute to the Zn(2+) site. A Glycyl lysine isopeptide (Lys-Gly) (interchain with G-Cter in ubiquitin) cross-link involves residue lysine 170. Cysteine 177 serves as a coordination point for Zn(2+). NAD(+) is bound by residues glycine 214, serine 216, asparagine 240, glutamine 242, and valine 258. Positions 284-355 are disordered; sequence RALPPLPRPP…KRVKAKAVPS (72 aa). Positions 287-296 are enriched in pro residues; it reads PPLPRPPTPK. Threonine 294 carries the phosphothreonine modification. Phosphoserine is present on residues serine 303 and serine 330. The segment covering 343 to 355 has biased composition (basic residues); the sequence is RPPKRVKAKAVPS.

It belongs to the sirtuin family. Class IV subfamily. In terms of assembly, homodimer; binds to nucleosomes and DNA ends as a homodimer. Interacts with RELA; interferes with RELA binding to target DNA. Interacts with SMARCA5; promoting recruitment of SMARCA5/SNF2H to double-strand breaks (DSBs) sites. Interacts with the mTORC2 complex; preventing the ability of SIRT6 to deacetylate FOXO1. Interacts with the CLOCK-BMAL1 complex; recruited by the CLOCK-BMAL1 complex to regulate expression of clock-controlled genes. Interacts with CSNK2A2; preventing CSNK2A2 localization to the nucleus. As to quaternary structure, (Microbial infection) Interacts with Kaposi's sarcoma-associated herpesvirus protein VIRF-1; this interaction prevents SIRT6 deubiquitination by USP10. Zn(2+) serves as cofactor. In terms of processing, acetylated at Lys-33. Deacetylation at Lys-33 by SIRT1 promotes homomultimerization and binding to double-strand breaks (DSBs) sites. Phosphorylation at Ser-10 by MAPK8/JNK1 in response to oxidative stress stimulates the mono-ADP-ribosyltransferase activity on PARP1, leading to PARP1 recruitment to double-strand breaks (DSBs). Post-translationally, monoubiquitinated at Lys-170 by STUB1/CHIP, preventing its degradation by the proteasome. Deubiquitinated by USP10, also preventing its degradation by the proteasome. In terms of processing, sumoylated, leading to specifically decrease ability to deacetylate histone H3 at 'Lys-56' (H3K56ac).

It is found in the nucleus. It localises to the chromosome. The protein resides in the telomere. Its subcellular location is the endoplasmic reticulum. The enzyme catalyses N(6)-acetyl-L-lysyl-[protein] + NAD(+) + H2O = 2''-O-acetyl-ADP-D-ribose + nicotinamide + L-lysyl-[protein]. The catalysed reaction is N(6)-tetradecanoyl-L-lysyl-[protein] + NAD(+) + H2O = 2''-O-tetradecanoyl-ADP-D-ribose + nicotinamide + L-lysyl-[protein]. It carries out the reaction N(6)-hexadecanoyl-L-lysyl-[protein] + NAD(+) + H2O = 2''-O-hexadecanoyl-ADP-D-ribose + nicotinamide + L-lysyl-[protein]. It catalyses the reaction L-lysyl-[protein] + NAD(+) = N(6)-(ADP-D-ribosyl)-L-lysyl-[protein] + nicotinamide + H(+). The enzyme catalyses L-arginyl-[protein] + NAD(+) = N(omega)-(ADP-D-ribosyl)-L-arginyl-[protein] + nicotinamide + H(+). With respect to regulation, compared to the defatty-acylase activity, the protein deacetylase activity is weak in vitro, and requires activation. The histone deacetylase activity is strongly activated upon binding to nucleosomes and chromatin in vivo. Two molecules of SIRT6 associate with the acidic patch of one nucleosome, while the C-terminal disordered region of SIRT6 associates with nucleosomal DNA, leading to efficient histone deacetylation. The protein-lysine deacetylase activity is also activated by long-chain free fatty-acids. The histone deacetylase activity is specifically repressed by long non-coding RNA lncPRESS1, which binds to SIRT6 and prevents chromatin-binding, thereby promoting stem cell pluripotency. Due to its essential role as tumor suppressor and involvement in DNA repair and life span, extensive research is made for the identification of small compound regulators of SIRT6. Nitro-fatty acids (nitro-oleic acid and nitro-conjugated linoleic acid) strongly stimulate the protein-lysine deacetylase activity by forming a covalent Michael adduct formation with Cys-18. Activated by UBCS039 (4-(pyridin-3-yl)-4,5- dihydropyrrolo[1,2-a]quinoxaline). Inhibited by non-selective hydroxamate trichostatin A inhibitor. Deacetylase activity is activated by fluvastatin and quercetin-based compounds. The protein-lysine deacetylase activity, but not the defatty-acylase activity, is specifically activated by MDL-800 and MDL-801 activators in vivo, enhancing the histone deacetylase and tumor suppressor activities. MDL-800 and MDL-801 selectively activate SIRT6 and not other members of the sirtuin family. The binding-mode of MDL-801 is however subject to discussion. Functionally, NAD-dependent protein deacetylase, deacylase and mono-ADP-ribosyltransferase that plays an essential role in DNA damage repair, telomere maintenance, metabolic homeostasis, inflammation, tumorigenesis and aging. Displays protein-lysine deacetylase or defatty-acylase (demyristoylase and depalmitoylase) activity, depending on the context. Acts as a key histone deacetylase by catalyzing deacetylation of histone H3 at 'Lys-9', 'Lys-18' and 'Lys-56' (H3K9ac, H3K18ac and H3K56ac, respectively), suppressing target gene expression of several transcription factors, including NF-kappa-B. Acts as an inhibitor of transcription elongation by mediating deacetylation of H3K9ac and H3K56ac, preventing release of NELFE from chromatin and causing transcriptional pausing. Involved in DNA repair by promoting double-strand break (DSB) repair: acts as a DSB sensor by recognizing and binding DSB sites, leading to (1) recruitment of DNA repair proteins, such as SMARCA5/SNF2H, and (2) deacetylation of histone H3K9ac and H3K56ac. SIRT6 participation to DSB repair is probably involved in extension of life span. Also promotes DNA repair by deacetylating non-histone proteins, such as DDB2 and p53/TP53. Specifically deacetylates H3K18ac at pericentric heterochromatin, thereby maintaining pericentric heterochromatin silencing at centromeres and protecting against genomic instability and cellular senescence. Involved in telomere maintenance by catalyzing deacetylation of histone H3 in telomeric chromatin, regulating telomere position effect and telomere movement in response to DNA damage. Required for embryonic stem cell differentiation by mediating histone deacetylation of H3K9ac. Plays a major role in metabolism by regulating processes such as glycolysis, gluconeogenesis, insulin secretion and lipid metabolism. Inhibits glycolysis via histone deacetylase activity and by acting as a corepressor of the transcription factor HIF1A, thereby controlling the expression of multiple glycolytic genes. Has tumor suppressor activity by repressing glycolysis, thereby inhibiting the Warburg effect. Also regulates glycolysis and tumorigenesis by mediating deacetylation and nuclear export of non-histone proteins, such as isoform M2 of PKM (PKM2). Acts as a negative regulator of gluconeogenesis by mediating deacetylation of non-histone proteins, such as FOXO1 and KAT2A/GCN5. Promotes beta-oxidation of fatty acids during fasting by catalyzing deacetylation of NCOA2, inducing coactivation of PPARA. Acts as a regulator of lipid catabolism in brown adipocytes, both by catalyzing deacetylation of histones and non-histone proteins, such as FOXO1. Also acts as a regulator of circadian rhythms, both by regulating expression of clock-controlled genes involved in lipid and carbohydrate metabolism, and by catalyzing deacetylation of PER2. The defatty-acylase activity is specifically involved in regulation of protein secretion. Has high activity toward long-chain fatty acyl groups and mediates protein-lysine demyristoylation and depalmitoylation of target proteins, such as RRAS2 and TNF, thereby regulating their secretion. Also acts as a mono-ADP-ribosyltransferase by mediating mono-ADP-ribosylation of PARP1, TRIM28/KAP1 or SMARCC2/BAF170. Mono-ADP-ribosyltransferase activity is involved in DNA repair, cellular senescence, repression of LINE-1 retrotransposon elements and regulation of transcription. This is NAD-dependent protein deacylase sirtuin-6 from Homo sapiens (Human).